The sequence spans 374 residues: Ribosomal RNA large subunit methyltransferase G (374 aa).

Belongs to the methyltransferase superfamily. RlmG family.

The protein resides in the cytoplasm. The catalysed reaction is guanosine(1835) in 23S rRNA + S-adenosyl-L-methionine = N(2)-methylguanosine(1835) in 23S rRNA + S-adenosyl-L-homocysteine + H(+). In terms of biological role, specifically methylates the guanine in position 1835 (m2G1835) of 23S rRNA. In Pseudomonas putida (strain ATCC 700007 / DSM 6899 / JCM 31910 / BCRC 17059 / LMG 24140 / F1), this protein is Ribosomal RNA large subunit methyltransferase G.